Reading from the N-terminus, the 672-residue chain is Spermatid perinuclear RNA-binding protein (672 aa).

The region spanning 5-362 (RSFANDDRHV…ALKRPFEDGV (358 aa)) is the DZF domain. The interval 348–370 (GTGSSALKRPFEDGVGDDKDPNK) is disordered. Positions 356 to 370 (RPFEDGVGDDKDPNK) are enriched in basic and acidic residues. The 67-residue stretch at 386–452 (DLMNALMRLN…AVKVLQAMGY (67 aa)) folds into the DRBM 1 domain. Positions 463–494 (VSSDEKSDNEGKNETVSSISSNNTGNSTADTS) are disordered. Residues 465–475 (SDEKSDNEGKN) show a composition bias toward basic and acidic residues. Low complexity predominate over residues 477-490 (TVSSISSNNTGNST). The DRBM 2 domain occupies 509 to 575 (SGKNPVMELN…ALAALEKLFS (67 aa)).

It localises to the cytoplasm. Functionally, may be involved in normal spermatogenesis and sperm function. Binds to double-stranded DNA and RNA. The chain is Spermatid perinuclear RNA-binding protein (STRBP) from Gallus gallus (Chicken).